The primary structure comprises 253 residues: ATP synthase subunit b 1 (253 aa).

Residues 5-27 traverse the membrane as a helical segment; sequence GWTVALQAVNFLILVLLLRHFLY.

It belongs to the ATPase B chain family. F-type ATPases have 2 components, F(1) - the catalytic core - and F(0) - the membrane proton channel. F(1) has five subunits: alpha(3), beta(3), gamma(1), delta(1), epsilon(1). F(0) has three main subunits: a(1), b(2) and c(10-14). The alpha and beta chains form an alternating ring which encloses part of the gamma chain. F(1) is attached to F(0) by a central stalk formed by the gamma and epsilon chains, while a peripheral stalk is formed by the delta and b chains.

The protein resides in the cell inner membrane. Functionally, f(1)F(0) ATP synthase produces ATP from ADP in the presence of a proton or sodium gradient. F-type ATPases consist of two structural domains, F(1) containing the extramembraneous catalytic core and F(0) containing the membrane proton channel, linked together by a central stalk and a peripheral stalk. During catalysis, ATP synthesis in the catalytic domain of F(1) is coupled via a rotary mechanism of the central stalk subunits to proton translocation. Its function is as follows. Component of the F(0) channel, it forms part of the peripheral stalk, linking F(1) to F(0). The protein is ATP synthase subunit b 1 of Rhodospirillum centenum (strain ATCC 51521 / SW).